A 409-amino-acid polypeptide reads, in one-letter code: WW domain-containing oxidoreductase (409 aa).

Positions methionine 1–aspartate 23 are disordered. 2 consecutive WW domains span residues aspartate 11–threonine 44 and glycine 52–leucine 86. Glycine 128–glycine 134 contacts NADP(+). Serine 257 provides a ligand contact to substrate. The active-site Proton acceptor is the tyrosine 288.

It belongs to the short-chain dehydrogenases/reductases (SDR) family.

It is found in the cytoplasm. The protein localises to the mitochondrion. The protein resides in the golgi apparatus. It localises to the lysosome. Functionally, putative oxidoreductase. May control genotoxic stress-induced cell death. May play a role in TGFB1 signaling and TGFB1-mediated cell death. May also play a role in tumor necrosis factor (TNF)-mediated cell death. May play a role in Wnt signaling. The polypeptide is WW domain-containing oxidoreductase (Wwox) (Drosophila melanogaster (Fruit fly)).